A 370-amino-acid polypeptide reads, in one-letter code: sn-glycerol-3-phosphate import ATP-binding protein UgpC (370 aa).

Positions leucine 4–leucine 235 constitute an ABC transporter domain. ATP is bound at residue glycine 37–serine 44.

The protein belongs to the ABC transporter superfamily. sn-glycerol-3-phosphate importer (TC 3.A.1.1.3) family. In terms of assembly, the complex is composed of two ATP-binding proteins (UgpC), two transmembrane proteins (UgpA and UgpE) and a solute-binding protein (UgpB).

The protein localises to the cell inner membrane. The enzyme catalyses sn-glycerol 3-phosphate(out) + ATP + H2O = sn-glycerol 3-phosphate(in) + ADP + phosphate + H(+). Functionally, part of the ABC transporter complex UgpBAEC involved in sn-glycerol-3-phosphate (G3P) import. Responsible for energy coupling to the transport system. The sequence is that of sn-glycerol-3-phosphate import ATP-binding protein UgpC from Chromohalobacter salexigens (strain ATCC BAA-138 / DSM 3043 / CIP 106854 / NCIMB 13768 / 1H11).